The primary structure comprises 867 residues: MTAFSSPSSNAASSATDRYQPLALEERWQALWKEQRLYETQDPKPGQRAFYALSMFPYPSGTLHMGHVRNYVITDVIARVQRMRGDAVLHPMGWDAFGLPAENAAIERKIEPGVWTDSNIAQMRGQLGRLGLSIDWDREVATCHSDYYRWTQWLFLELHAGGLAYQKDATVNWDPVDQTVLANEQVDADGRSWRSGALVEKRDLRQWFLRITDYADALLDDLDQLQGWPERVRTMQANWIGRSIGAEIDFQVEAHPGTSITVFTTRPDTLFGVSYLVLAPDHALVDQLTTSEERISVTAFRDLMAELSQDERTSDDQPKRGVPTGAVAINPANGKSIPIWIADYVLADYGTGAVMGVPAHDVRDFSFARQHELPVQRVIEVSGTNEHVNDGEAWAGPGTLIHSAGFSGLSNDEAKTAITNHGAENGWARAKRQYRLRDWLISRQRYWGCPIPIIHCDDCGAVPVPRDQLPVELPTGIDLKGAGGSPLARAEDWVSVTCPKCGKPARRETDTMDTFMCSSWYYLRFADPHNRDLPFNATSVNRWLPVKQYVGGIEHAILHLLYARFFTKALNDRDLLQTKEPFERLLTQGMVQGTTYRNPRTGRYISPAAVKDESNPLDPDDGGPLEVLFEKMSKSKHNGVDPAAVIDRYGADTARMFILFKAPPEKDLEWDDADVEGQFRFLQRLWRLVDSEVNHDGVSPATGESDSDIRRAVHQAIKAVSEDLSDDFQFNTAISELMKLSNSLSSGLAQASPGVRQEAMSALVRLLAPFAPHLAEEFWQRLGGEDSVHCQPWPDHDPEALVLASIEVVIQVKGKVRGSMSVAADCSKEELERLALASDVAQRWLEGKPPRRVIVVPGKLVNLVPSS.

Positions 57 to 67 (PYPSGTLHMGH) match the 'HIGH' region motif. The segment at 308-327 (SQDERTSDDQPKRGVPTGAV) is disordered. Positions 309–319 (QDERTSDDQPK) are enriched in basic and acidic residues. The 'KMSKS' region signature appears at 631–635 (KMSKS). Position 634 (lysine 634) interacts with ATP.

Belongs to the class-I aminoacyl-tRNA synthetase family.

The protein resides in the cytoplasm. The enzyme catalyses tRNA(Leu) + L-leucine + ATP = L-leucyl-tRNA(Leu) + AMP + diphosphate. The chain is Leucine--tRNA ligase from Synechococcus sp. (strain CC9311).